The following is a 95-amino-acid chain: Small ribosomal subunit protein uS17 (95 aa).

This sequence belongs to the universal ribosomal protein uS17 family. As to quaternary structure, part of the 30S ribosomal subunit.

Its function is as follows. One of the primary rRNA binding proteins, it binds specifically to the 5'-end of 16S ribosomal RNA. This is Small ribosomal subunit protein uS17 from Psychrobacter sp. (strain PRwf-1).